We begin with the raw amino-acid sequence, 446 residues long: Phosphoglucosamine mutase (446 aa).

Ser-99 acts as the Phosphoserine intermediate in catalysis. Mg(2+)-binding residues include Ser-99, Asp-242, Asp-244, and Asp-246. Phosphoserine is present on Ser-99.

Belongs to the phosphohexose mutase family. Requires Mg(2+) as cofactor. In terms of processing, activated by phosphorylation.

It carries out the reaction alpha-D-glucosamine 1-phosphate = D-glucosamine 6-phosphate. In terms of biological role, catalyzes the conversion of glucosamine-6-phosphate to glucosamine-1-phosphate. This is Phosphoglucosamine mutase from Campylobacter hominis (strain ATCC BAA-381 / DSM 21671 / CCUG 45161 / LMG 19568 / NCTC 13146 / CH001A).